Reading from the N-terminus, the 517-residue chain is MAVTAEDILSRLKASIQQPVGGDPTAVNVGTVASVGDGVARISGLRDVMASELLEFKQTKSGETVMGIALNLEKDNVAAVILGDYLEIEEGDLVRSTGKIISVPVGQELLGRVVDPLGRPLDGKGPISASKTREVERIAPGVIERKSVSQPVQTGILAIDALIPIGRGQRELIIGDRQTGKTAIAIDTIINQRGQGMVCVYVAIGQKRSKVAQTITTLEQNGAMDYTIVVNASASESAALQYIAPYSGCAIAEEVMEVGVTVDGNLVKDALIIYDDLSKHAVAYRQVSLLLRRPPGREAYPGDVFYLHSRLLERAARLSEVNGGGSITALPIIETQANDVSAYIPTNVISITDGQIFLESDLFYAGQRPALNVGISVSRVGSSAQTKAMKTVAGKMKLELAQFRELAAFAMFASDLDAGTKAQIERGQRLSELLKQPQYQPIALEDQVIILWVAGNGFLDDVPVARINDFKRDFWQFIHSSYAEVGRAIASEKVLSEATIASLRKAVTEFKQTASYK.

An ATP-binding site is contributed by 175–182 (GDRQTGKT).

The protein belongs to the ATPase alpha/beta chains family. As to quaternary structure, F-type ATPases have 2 components, CF(1) - the catalytic core - and CF(0) - the membrane proton channel. CF(1) has five subunits: alpha(3), beta(3), gamma(1), delta(1), epsilon(1). CF(0) has three main subunits: a(1), b(2) and c(9-12). The alpha and beta chains form an alternating ring which encloses part of the gamma chain. CF(1) is attached to CF(0) by a central stalk formed by the gamma and epsilon chains, while a peripheral stalk is formed by the delta and b chains.

Its subcellular location is the cell membrane. The catalysed reaction is ATP + H2O + 4 H(+)(in) = ADP + phosphate + 5 H(+)(out). Functionally, produces ATP from ADP in the presence of a proton gradient across the membrane. The alpha chain is a regulatory subunit. The protein is ATP synthase subunit alpha of Herpetosiphon aurantiacus (strain ATCC 23779 / DSM 785 / 114-95).